A 111-amino-acid chain; its full sequence is Large ribosomal subunit protein uL24 (111 aa).

Basic and acidic residues predominate over residues 48–65 (EKPSRSNREGGRTEREAP). A disordered region spans residues 48-111 (EKPSRSNREG…AKTTGEELDD (64 aa)). Over residues 69–80 (SNVNPIDSNGES) the composition is skewed to polar residues. Residues 86–95 (KKVEDPDTGR) show a composition bias toward basic and acidic residues.

Belongs to the universal ribosomal protein uL24 family. In terms of assembly, part of the 50S ribosomal subunit.

In terms of biological role, one of two assembly initiator proteins, it binds directly to the 5'-end of the 23S rRNA, where it nucleates assembly of the 50S subunit. Functionally, one of the proteins that surrounds the polypeptide exit tunnel on the outside of the subunit. The protein is Large ribosomal subunit protein uL24 of Salinibacter ruber (strain DSM 13855 / M31).